The following is a 1412-amino-acid chain: DNA-directed RNA polymerase subunit beta' (1412 aa).

Asp543, Asp545, and Asp547 together coordinate Mg(2+). 4 residues coordinate Zn(2+): Cys1017, Cys1092, Cys1099, and Cys1102.

Belongs to the RNA polymerase beta' chain family. As to quaternary structure, the RNAP catalytic core consists of 2 alpha, 1 beta, 1 beta' and 1 omega subunit. When a sigma factor is associated with the core the holoenzyme is formed, which can initiate transcription. It depends on Mg(2+) as a cofactor. Zn(2+) serves as cofactor.

The enzyme catalyses RNA(n) + a ribonucleoside 5'-triphosphate = RNA(n+1) + diphosphate. DNA-dependent RNA polymerase catalyzes the transcription of DNA into RNA using the four ribonucleoside triphosphates as substrates. This Mesomycoplasma hyopneumoniae (strain 7448) (Mycoplasma hyopneumoniae) protein is DNA-directed RNA polymerase subunit beta'.